The sequence spans 61 residues: Peroxidase 1 (61 aa).

The segment at aspartate 1 to arginine 32 is disordered. An N-linked (GlcNAc...) asparagine glycan is attached at asparagine 12. Residues aspartate 29, serine 31, and aspartate 36 each contribute to the Ca(2+) site.

This sequence belongs to the peroxidase family. Classical plant (class III) peroxidase subfamily. Ca(2+) serves as cofactor. It depends on heme b as a cofactor.

Its subcellular location is the secreted. The enzyme catalyses 2 a phenolic donor + H2O2 = 2 a phenolic radical donor + 2 H2O. Removal of H(2)O(2), oxidation of toxic reductants, biosynthesis and degradation of lignin, suberization, auxin catabolism, response to environmental stresses such as wounding, pathogen attack and oxidative stress. These functions might be dependent on each isozyme/isoform in each plant tissue. This Vitis rotundifolia (Muscadine grape) protein is Peroxidase 1.